Here is a 119-residue protein sequence, read N- to C-terminus: uncharacterized protein (119 aa).

It to Synechocystis PCC 6803 slr0903.

This is an uncharacterized protein from Methanocaldococcus jannaschii (strain ATCC 43067 / DSM 2661 / JAL-1 / JCM 10045 / NBRC 100440) (Methanococcus jannaschii).